A 156-amino-acid chain; its full sequence is CRIB domain-containing protein RIC11 (156 aa).

One can recognise a CRIB domain in the interval 26–39 (IGHPTEVKHVAHIG). The tract at residues 87–156 (QDQLNISDRI…SMVSRLNSNA (70 aa)) is disordered. Residues 109 to 120 (IHTKSKNRRKKP) are compositionally biased toward basic residues. Residues 121-142 (SSTSSPRSRPSPKSSRSMGLSK) are compositionally biased toward low complexity.

In terms of biological role, functions as a downstream effector of Rho-related GTP binding proteins of the 'Rho of Plants' (ROPs) family. Participates in the propagation of ROP GTPase signals in specific cellular responses. This Arabidopsis thaliana (Mouse-ear cress) protein is CRIB domain-containing protein RIC11 (RIC11).